A 287-amino-acid chain; its full sequence is MPRILFTVPPFPVFIAAGEGVFKKGETHVKRVFSVFDLIYVKQGTLYITENETSFSVEGGEYILLSPGLEHYGTKGSDEATSYYWLHFDEHRYEFTAKGGSNWSELQQEKGSFEELARYGLALPRKGKVQRPQFMAQQFEKLIDYSAENSDLPLRKQILFEELMLHLQKEAFQIPSAKERVAWEAARYLQEHYKEKTTIKDLSLALHYHQDYVSRCMQQVLGVTPAQYTNRVRMTEAKRLLSSTNDKMGVIAETVGMEDPTYFSKLFKQIEGISPIEYRKIVSRKVQ.

Positions 183-281 constitute an HTH araC/xylS-type domain; that stretch reads WEAARYLQEH…GISPIEYRKI (99 aa). 2 DNA-binding regions (H-T-H motif) span residues 200–221 and 248–271; these read KDLSLALHYHQDYVSRCMQQVL and MGVIAETVGMEDPTYFSKLFKQIE.

This is an uncharacterized protein from Bacillus subtilis (strain 168).